A 319-amino-acid polypeptide reads, in one-letter code: Ornithine carbamoyltransferase (319 aa).

Residues 57–60 (STRT), Gln84, Arg108, and 135–138 (HPCQ) each bind carbamoyl phosphate. L-ornithine contacts are provided by residues Asn166, Asp230, and 234–235 (SM). Residues 270–271 (CL) and Arg298 each bind carbamoyl phosphate.

The protein belongs to the aspartate/ornithine carbamoyltransferase superfamily. OTCase family.

Its subcellular location is the cytoplasm. It catalyses the reaction carbamoyl phosphate + L-ornithine = L-citrulline + phosphate + H(+). It functions in the pathway amino-acid biosynthesis; L-arginine biosynthesis; L-arginine from L-ornithine and carbamoyl phosphate: step 1/3. Functionally, reversibly catalyzes the transfer of the carbamoyl group from carbamoyl phosphate (CP) to the N(epsilon) atom of ornithine (ORN) to produce L-citrulline. This Bacillus subtilis (strain 168) protein is Ornithine carbamoyltransferase (argF).